We begin with the raw amino-acid sequence, 261 residues long: 5'-nucleotidase SurE (261 aa).

The a divalent metal cation site is built by D10, D11, S41, and N96.

Belongs to the SurE nucleotidase family. A divalent metal cation serves as cofactor.

It is found in the cytoplasm. The enzyme catalyses a ribonucleoside 5'-phosphate + H2O = a ribonucleoside + phosphate. Functionally, nucleotidase that shows phosphatase activity on nucleoside 5'-monophosphates. The sequence is that of 5'-nucleotidase SurE from Methanococcoides burtonii (strain DSM 6242 / NBRC 107633 / OCM 468 / ACE-M).